Reading from the N-terminus, the 306-residue chain is Ribonuclease Z (306 aa).

7 residues coordinate Zn(2+): H63, H65, D67, H68, H140, D211, and H269. The active-site Proton acceptor is D67.

The protein belongs to the RNase Z family. As to quaternary structure, homodimer. It depends on Zn(2+) as a cofactor.

It catalyses the reaction Endonucleolytic cleavage of RNA, removing extra 3' nucleotides from tRNA precursor, generating 3' termini of tRNAs. A 3'-hydroxy group is left at the tRNA terminus and a 5'-phosphoryl group is left at the trailer molecule.. In terms of biological role, zinc phosphodiesterase, which displays some tRNA 3'-processing endonuclease activity. Probably involved in tRNA maturation, by removing a 3'-trailer from precursor tRNA. This Listeria innocua serovar 6a (strain ATCC BAA-680 / CLIP 11262) protein is Ribonuclease Z.